A 238-amino-acid chain; its full sequence is Ribonuclease PH (238 aa).

Phosphate contacts are provided by residues Arg-86 and 124–126; that span reads GTR.

This sequence belongs to the RNase PH family. As to quaternary structure, homohexameric ring arranged as a trimer of dimers.

The enzyme catalyses tRNA(n+1) + phosphate = tRNA(n) + a ribonucleoside 5'-diphosphate. In terms of biological role, phosphorolytic 3'-5' exoribonuclease that plays an important role in tRNA 3'-end maturation. Removes nucleotide residues following the 3'-CCA terminus of tRNAs; can also add nucleotides to the ends of RNA molecules by using nucleoside diphosphates as substrates, but this may not be physiologically important. Probably plays a role in initiation of 16S rRNA degradation (leading to ribosome degradation) during starvation. The sequence is that of Ribonuclease PH from Dichelobacter nodosus (strain VCS1703A).